The primary structure comprises 162 residues: Putative ripening-related protein 7 (162 aa).

A signal peptide spans 1-30; it reads MAAAAASTKIVAVVVAVLLAILEMPSCAVA.

It belongs to the kiwellin family.

It localises to the secreted. The polypeptide is Putative ripening-related protein 7 (Oryza sativa subsp. japonica (Rice)).